The sequence spans 582 residues: NudC domain-containing protein 1 (582 aa).

Ser-7 carries the post-translational modification Phosphoserine. The CS domain maps to 272–360; sequence KVEPLYYWQQ…NEGLMWPELV (89 aa). Position 387 is a phosphoserine (Ser-387).

The protein localises to the cytoplasm. The protein resides in the nucleus. In Mus musculus (Mouse), this protein is NudC domain-containing protein 1.